Consider the following 435-residue polypeptide: 3-phosphoshikimate 1-carboxyvinyltransferase (435 aa).

Residues K23, S24, and R28 each coordinate 3-phosphoshikimate. A phosphoenolpyruvate-binding site is contributed by K23. Phosphoenolpyruvate is bound by residues G97 and R125. S170, S171, Q172, S198, D314, N338, and K342 together coordinate 3-phosphoshikimate. Q172 contributes to the phosphoenolpyruvate binding site. The Proton acceptor role is filled by D314. Positions 346, 388, and 413 each coordinate phosphoenolpyruvate.

Belongs to the EPSP synthase family. As to quaternary structure, monomer.

It localises to the cytoplasm. It catalyses the reaction 3-phosphoshikimate + phosphoenolpyruvate = 5-O-(1-carboxyvinyl)-3-phosphoshikimate + phosphate. It functions in the pathway metabolic intermediate biosynthesis; chorismate biosynthesis; chorismate from D-erythrose 4-phosphate and phosphoenolpyruvate: step 6/7. Catalyzes the transfer of the enolpyruvyl moiety of phosphoenolpyruvate (PEP) to the 5-hydroxyl of shikimate-3-phosphate (S3P) to produce enolpyruvyl shikimate-3-phosphate and inorganic phosphate. This chain is 3-phosphoshikimate 1-carboxyvinyltransferase, found in Sodalis glossinidius (strain morsitans).